The primary structure comprises 279 residues: Oxygen-dependent coproporphyrinogen-III oxidase (279 aa).

Ser-102 contributes to the substrate binding site. The a divalent metal cation site is built by His-106 and His-116. The active-site Proton donor is the His-116. 118–120 contributes to the substrate binding site; the sequence is NTR. His-149 and His-179 together coordinate a divalent metal cation. Residues 244 to 279 are important for dimerization; that stretch reads YVEFNLLYDRGTKFGLMTDGNVEAILMSLPPEVKFN.

It belongs to the aerobic coproporphyrinogen-III oxidase family. As to quaternary structure, homodimer. The cofactor is a divalent metal cation.

The protein localises to the cytoplasm. It carries out the reaction coproporphyrinogen III + O2 + 2 H(+) = protoporphyrinogen IX + 2 CO2 + 2 H2O. The protein operates within porphyrin-containing compound metabolism; protoporphyrin-IX biosynthesis; protoporphyrinogen-IX from coproporphyrinogen-III (O2 route): step 1/1. Its function is as follows. Involved in the heme biosynthesis. Catalyzes the aerobic oxidative decarboxylation of propionate groups of rings A and B of coproporphyrinogen-III to yield the vinyl groups in protoporphyrinogen-IX. This is Oxygen-dependent coproporphyrinogen-III oxidase from Rickettsia peacockii (strain Rustic).